The primary structure comprises 545 residues: MAKQLVFDEHARRSLERGVNAVANAVKVTLGPRGRNVVIEKKFGSPTITKDGVTVAKEVELEDKLENIGAQLLKEIASKTNDITGDGTTTATVLGQAIVKEGLRNVAAGANPLALKRGIEKAVAAATEEIKKLAVPVEDSNAIKKVAGISANDAQVGEEIANAMDKVGKEGVITIEESKSFDTEVDVVEGMQFDKGYISPYFITNPDKMEAVLEDAYILINEKKISALKDLLPVLEKVAQTSRPLLIIAEDVEGEALATLIVNKLRGTLNIAAVKAPGFGDRRKEMLRDIAAVTGGQVVSEDLGHRLENVTLDMLGRAKRIRITKDETTIIDGMGNQAEIDARVNAIKAELETTDSDYAREKLQERLAKLAGGVAVIRVGAATETELKEKKHRYEDALSTARSAVEEGIVAGGGTTLLRVIPAVKQLAESLEGDEATGARILVRALEEPARQIAANAGDEGSVIVNAVLNSDKPRYGYNAATGEFVDDMVAAGIVDPAKVTRTALQNAASIGGLILTTEAIVSDKPEKEKAPAAAGAPDMGGMDF.

ATP is bound by residues 29 to 32, lysine 50, 86 to 90, glycine 413, 479 to 481, and aspartate 496; these read TLGP, DGTTT, and NAA. Residues 525–545 are disordered; the sequence is KPEKEKAPAAAGAPDMGGMDF. The span at 532-545 shows a compositional bias: low complexity; the sequence is PAAAGAPDMGGMDF.

It belongs to the chaperonin (HSP60) family. Forms a cylinder of 14 subunits composed of two heptameric rings stacked back-to-back. Interacts with the co-chaperonin GroES.

The protein resides in the cytoplasm. The catalysed reaction is ATP + H2O + a folded polypeptide = ADP + phosphate + an unfolded polypeptide.. In terms of biological role, together with its co-chaperonin GroES, plays an essential role in assisting protein folding. The GroEL-GroES system forms a nano-cage that allows encapsulation of the non-native substrate proteins and provides a physical environment optimized to promote and accelerate protein folding. The protein is Chaperonin GroEL of Deinococcus geothermalis (strain DSM 11300 / CIP 105573 / AG-3a).